The chain runs to 590 residues: Fucose-1-phosphate guanylyltransferase (590 aa).

In terms of tissue distribution, expressed at highest levels in brain, moderately in testis, ovary and kidney, and weakly in liver, spleen, heart and lung.

It localises to the cytoplasm. It carries out the reaction beta-L-fucose 1-phosphate + GTP + H(+) = GDP-beta-L-fucose + diphosphate. Functionally, catalyzes the formation of GDP-L-fucose from GTP and L-fucose-1-phosphate. Functions as a salvage pathway to reutilize L-fucose arising from the turnover of glycoproteins and glycolipids. The polypeptide is Fucose-1-phosphate guanylyltransferase (Mus musculus (Mouse)).